We begin with the raw amino-acid sequence, 104 residues long: MSTYAIIKTGGKQVKVEVGQAVYVEKLNVEAGQEVTFNEVVLVGGENTVVGTPLVAGATVVGTVEKQGKQKKVVTYKYKPKKGSHRKQGHRQPYTKVVINAINA.

It belongs to the bacterial ribosomal protein bL21 family. In terms of assembly, part of the 50S ribosomal subunit. Contacts protein L20.

Its function is as follows. This protein binds to 23S rRNA in the presence of protein L20. In Streptococcus pneumoniae serotype 2 (strain D39 / NCTC 7466), this protein is Large ribosomal subunit protein bL21.